A 953-amino-acid chain; its full sequence is MPTYFQRPENALKRANEFIEVGKKEPALDALYDVIKSKKHRTWQNKIHEPILFKYLELCVDLRRSHVAKEGLYQYKLICQQVNIASLEDVIRYFLKLAESRAVEAQEDSRKEASAELDEDVDIEDLDQIQTPESLLLSFVSGEDTQDRTDRVKLTPWVKFLWEAYRNVLELLRNNVRVEKLYHETAQQAFKFCLKYTRRTEFRKLCDNLRNHLNVTLKHQGQPNSVNLNNPDSIQMHLETRLAQLDSAISMELWQEAFKAVEDVYGLMQLSKRPPKPQVMANYYQKVALVFLKAGNFLYHACTQQRLYLLMREQKKSITSEELQKMASHVLLATLSVPIQVSLSNTEKYLELDEVAREKSKRLANLLNLQNTPTRESLLQDMLKANVLQYVNTKVHCLYQLLEKDFRPLDLCAKVNEVCQYLESCDDADLCQYIKPIQNIAVTRLLKQVSQVFQTIEFSRLMALVPFMTEFQLERMIVDIAKEKNLQVRLDHRTKSISFGLDLHVAHREEVPEGPYLQAMPSEGLRNQLTLMSVALQRSIFTIQHDHIKAKKREEQEQMAQNYLRTARKEHKLMLERKTVIEARKEYLESVMQERERREYEKIKKQKVENQEAEQKRLDEERRQREIQRRRQELQDIEKRQAMDKIAALKKTTVGAKALKDLSPEEIDNMNADDIIAKQVEQLDKEKRELQTKLKTQEKKVDYFARAMRMEEIPLLNKQYEEHLVADREFWENQEEERVRKAIEEHEKLVETSARLQRMIPDKDAFINTLRESRTEEYQAKFQAFQAKLEQVRKERLEVRRKRRIKDRKERKKIEMEEAKKREQEEKERKKEEKERIEREEREAKEREYAERIAKQNEIDRKRREKELEIERRLEERAGVGQVQQIRCLFITGWGDHEDGGDRWRDERGGDRGPDRGGDKPGAWRPKWQREEPDRGGDRWRGGDRRDGMITMS.

Residues 323-504 form the PCI domain; the sequence is LQKMASHVLL…KSISFGLDLH (182 aa). 3 coiled-coil regions span residues 593–642, 670–704, and 732–877; these read QERE…KRQA, MNADDIIAKQVEQLDKEKRELQTKLKTQEKKVDYF, and ENQE…LEER. Positions 603 to 623 are disordered; sequence IKKQKVENQEAEQKRLDEERR. 2 disordered regions span residues 810-861 and 893-953; these read ERKK…EIDR and GWGD…ITMS. Composition is skewed to basic and acidic residues over residues 812–861, 895–919, and 928–953; these read KKIE…EIDR, GDHEDGGDRWRDERGGDRGPDRGGD, and WQREEPDRGGDRWRGGDRRDGMITMS.

Belongs to the eIF-3 subunit A family. Component of the eukaryotic translation initiation factor 3 (eIF-3) complex.

The protein localises to the cytoplasm. RNA-binding component of the eukaryotic translation initiation factor 3 (eIF-3) complex, which is involved in protein synthesis of a specialized repertoire of mRNAs and, together with other initiation factors, stimulates binding of mRNA and methionyl-tRNAi to the 40S ribosome. The eIF-3 complex specifically targets and initiates translation of a subset of mRNAs involved in cell proliferation. This is Eukaryotic translation initiation factor 3 subunit A from Nematostella vectensis (Starlet sea anemone).